The chain runs to 434 residues: Homogentisate 1,2-dioxygenase (434 aa).

His289 acts as the Proton acceptor in catalysis. Fe cation-binding residues include His332 and Glu338. Positions 347 and 368 each coordinate homogentisate. His368 serves as a coordination point for Fe cation.

It belongs to the homogentisate dioxygenase family. As to quaternary structure, hexamer; dimer of trimers. Fe cation is required as a cofactor.

The catalysed reaction is homogentisate + O2 = 4-maleylacetoacetate + H(+). The protein operates within amino-acid degradation; L-phenylalanine degradation; acetoacetate and fumarate from L-phenylalanine: step 4/6. Functionally, involved in the catabolism of homogentisate (2,5-dihydroxyphenylacetate or 2,5-OH-PhAc), a central intermediate in the degradation of phenylalanine and tyrosine. Catalyzes the oxidative ring cleavage of the aromatic ring of homogentisate to yield maleylacetoacetate. The polypeptide is Homogentisate 1,2-dioxygenase (Pseudomonas syringae pv. syringae (strain B728a)).